The sequence spans 286 residues: ATP synthase gamma chain (286 aa).

The protein belongs to the ATPase gamma chain family. F-type ATPases have 2 components, CF(1) - the catalytic core - and CF(0) - the membrane proton channel. CF(1) has five subunits: alpha(3), beta(3), gamma(1), delta(1), epsilon(1). CF(0) has three main subunits: a, b and c.

The protein resides in the cell membrane. In terms of biological role, produces ATP from ADP in the presence of a proton gradient across the membrane. The gamma chain is believed to be important in regulating ATPase activity and the flow of protons through the CF(0) complex. The chain is ATP synthase gamma chain from Mycoplasma mobile (strain ATCC 43663 / 163K / NCTC 11711) (Mesomycoplasma mobile).